The following is a 72-amino-acid chain: Conotoxin 3 (72 aa).

Residues 1–22 (MKLTCVVIVAVLLLTACQLITA) form the signal peptide. The propeptide occupies 23 to 46 (DDSRGTQEHRALRSDTKLSMLTLR). 3 cysteine pairs are disulfide-bonded: Cys47–Cys61, Cys54–Cys64, and Cys60–Cys71.

This sequence belongs to the conotoxin O1 superfamily. Expressed by the venom duct.

The protein resides in the secreted. This Conus striatus (Striated cone) protein is Conotoxin 3.